A 121-amino-acid polypeptide reads, in one-letter code: ATP synthase epsilon chain (121 aa).

Belongs to the ATPase epsilon chain family. F-type ATPases have 2 components, CF(1) - the catalytic core - and CF(0) - the membrane proton channel. CF(1) has five subunits: alpha(3), beta(3), gamma(1), delta(1), epsilon(1). CF(0) has three main subunits: a, b and c.

It is found in the cell membrane. In terms of biological role, produces ATP from ADP in the presence of a proton gradient across the membrane. The sequence is that of ATP synthase epsilon chain from Mycobacterium avium (strain 104).